Here is a 425-residue protein sequence, read N- to C-terminus: bZIP transcription factor RISBZ2 (425 aa).

Disordered regions lie at residues 1–50 and 169–257; these read MERV…GGGG and NSIG…AAHL. Positions 30–50 are enriched in gly residues; it reads QGGGGVASGGGGGVAGGGGGG. Positions 171 to 182 are enriched in polar residues; it reads IGGNATPVQNML. Acidic residues predominate over residues 213 to 222; sequence SDDDDMEGEA. Basic and acidic residues predominate over residues 231–247; that stretch reads ADQRLQRRKQSNRESAR. Positions 232 to 295 constitute a bZIP domain; that stretch reads DQRLQRRKQS…NDAAVDNRVL (64 aa). The interval 234 to 253 is basic motif; sequence RLQRRKQSNRESARRSRSRK. The segment at 260 to 274 is leucine-zipper; sequence LEAQVSQLRVENSSL. Positions 334 to 354 are disordered; it reads MPFNSSPSEATSDAAVPIQDD.

In terms of assembly, heterodimer with RISBZ1/BZIP58.

The protein localises to the nucleus. Transcriptional activator that binds to the DNA specific sequence 5'-GCCACGT[AC]AG-3' found in the alpha-globulin gene promoter. Does not bind to promoters of other major storage genes such as glutelin, prolamin and albumin. Binds to the DNA specific sequence 5'-TGAGTCA-3' found in seed storage protein gene promoters. This Oryza sativa subsp. japonica (Rice) protein is bZIP transcription factor RISBZ2.